The primary structure comprises 306 residues: Ornithine carbamoyltransferase (306 aa).

Carbamoyl phosphate contacts are provided by residues 46–49 (STRT), Gln73, Arg97, and 124–127 (HPTQ). L-ornithine-binding positions include Asn156, Asp220, and 224-225 (SM). Carbamoyl phosphate contacts are provided by residues 260–261 (CL) and Arg288.

Belongs to the aspartate/ornithine carbamoyltransferase superfamily. OTCase family.

The protein localises to the cytoplasm. The catalysed reaction is carbamoyl phosphate + L-ornithine = L-citrulline + phosphate + H(+). The protein operates within amino-acid degradation; L-arginine degradation via ADI pathway; carbamoyl phosphate from L-arginine: step 2/2. Reversibly catalyzes the transfer of the carbamoyl group from carbamoyl phosphate (CP) to the N(epsilon) atom of ornithine (ORN) to produce L-citrulline. This Campylobacter jejuni subsp. jejuni serotype O:6 (strain 81116 / NCTC 11828) protein is Ornithine carbamoyltransferase.